The chain runs to 115 residues: Large ribosomal subunit protein bL20c (115 aa).

It belongs to the bacterial ribosomal protein bL20 family.

It localises to the plastid. The protein resides in the chloroplast. Functionally, binds directly to 23S ribosomal RNA and is necessary for the in vitro assembly process of the 50S ribosomal subunit. It is not involved in the protein synthesizing functions of that subunit. The protein is Large ribosomal subunit protein bL20c of Emiliania huxleyi (Coccolithophore).